Consider the following 173-residue polypeptide: GTP-dependent dephospho-CoA kinase (173 aa).

Positions 52, 53, 54, 71, 73, and 122 each coordinate GTP.

Belongs to the GTP-dependent DPCK family.

The enzyme catalyses 3'-dephospho-CoA + GTP = GDP + CoA + H(+). Its pathway is cofactor biosynthesis; coenzyme A biosynthesis. Catalyzes the GTP-dependent phosphorylation of the 3'-hydroxyl group of dephosphocoenzyme A to form coenzyme A (CoA). This Metallosphaera sedula (strain ATCC 51363 / DSM 5348 / JCM 9185 / NBRC 15509 / TH2) protein is GTP-dependent dephospho-CoA kinase.